Reading from the N-terminus, the 174-residue chain is Co-chaperone protein HscB (174 aa).

Residues 2 to 74 (DYFTLFGLPA…LKRAEYMLSL (73 aa)) enclose the J domain.

The protein belongs to the HscB family. As to quaternary structure, interacts with HscA and stimulates its ATPase activity. Interacts with IscU.

Co-chaperone involved in the maturation of iron-sulfur cluster-containing proteins. Seems to help targeting proteins to be folded toward HscA. The polypeptide is Co-chaperone protein HscB (Yersinia pseudotuberculosis serotype O:1b (strain IP 31758)).